The chain runs to 395 residues: NADH-quinone oxidoreductase subunit D (395 aa).

This sequence belongs to the complex I 49 kDa subunit family. NDH-1 is composed of 14 different subunits. Subunits NuoB, C, D, E, F, and G constitute the peripheral sector of the complex.

It is found in the cell inner membrane. The catalysed reaction is a quinone + NADH + 5 H(+)(in) = a quinol + NAD(+) + 4 H(+)(out). Functionally, NDH-1 shuttles electrons from NADH, via FMN and iron-sulfur (Fe-S) centers, to quinones in the respiratory chain. The immediate electron acceptor for the enzyme in this species is believed to be ubiquinone. Couples the redox reaction to proton translocation (for every two electrons transferred, four hydrogen ions are translocated across the cytoplasmic membrane), and thus conserves the redox energy in a proton gradient. The sequence is that of NADH-quinone oxidoreductase subunit D from Anaplasma phagocytophilum (strain HZ).